Reading from the N-terminus, the 272-residue chain is Small ribosomal subunit protein mS23 (272 aa).

The disordered stretch occupies residues 233 to 272 (KENASKAAGDASAVSSEKQVEDDVVNFDESTDADQEVLHF). A compositionally biased stretch (acidic residues) spans 252–272 (VEDDVVNFDESTDADQEVLHF).

Belongs to the mitochondrion-specific ribosomal protein mS23 family. In terms of assembly, component of the mitochondrial small ribosomal subunit.

The protein localises to the mitochondrion. This is Small ribosomal subunit protein mS23 (RSM25) from Candida glabrata (strain ATCC 2001 / BCRC 20586 / JCM 3761 / NBRC 0622 / NRRL Y-65 / CBS 138) (Yeast).